Reading from the N-terminus, the 292-residue chain is ATP synthase gamma chain (292 aa).

The protein belongs to the ATPase gamma chain family. In terms of assembly, F-type ATPases have 2 components, CF(1) - the catalytic core - and CF(0) - the membrane proton channel. CF(1) has five subunits: alpha(3), beta(3), gamma(1), delta(1), epsilon(1). CF(0) has three main subunits: a, b and c.

It localises to the cell inner membrane. Functionally, produces ATP from ADP in the presence of a proton gradient across the membrane. The gamma chain is believed to be important in regulating ATPase activity and the flow of protons through the CF(0) complex. This is ATP synthase gamma chain from Rhodopseudomonas palustris (strain BisB18).